A 249-amino-acid polypeptide reads, in one-letter code: 2,3,4,5-tetrahydropyridine-2,6-dicarboxylate N-acetyltransferase (249 aa).

Belongs to the transferase hexapeptide repeat family. DapH subfamily.

It catalyses the reaction (S)-2,3,4,5-tetrahydrodipicolinate + acetyl-CoA + H2O = L-2-acetamido-6-oxoheptanedioate + CoA. Its pathway is amino-acid biosynthesis; L-lysine biosynthesis via DAP pathway; LL-2,6-diaminopimelate from (S)-tetrahydrodipicolinate (acetylase route): step 1/3. Its function is as follows. Catalyzes the transfer of an acetyl group from acetyl-CoA to tetrahydrodipicolinate. This Fervidobacterium nodosum (strain ATCC 35602 / DSM 5306 / Rt17-B1) protein is 2,3,4,5-tetrahydropyridine-2,6-dicarboxylate N-acetyltransferase.